Here is a 323-residue protein sequence, read N- to C-terminus: GDP-L-fucose synthase 1 (323 aa).

N-acetylalanine is present on A2. 23-29 contacts NADP(+); sequence GHRGLVG. The active-site Proton donor/acceptor is Y149. Residues K153, 176-179, and H192 contribute to the NADP(+) site; that span reads PTNL. Substrate is bound by residues R200, W215, R222, and D282.

This sequence belongs to the NAD(P)-dependent epimerase/dehydratase family. Fucose synthase subfamily. In terms of assembly, binds and stabilizes MUR1. Homodimer. In terms of tissue distribution, highly expressed in roots and flowers, less abundant in leaves, stems and siliques.

It carries out the reaction GDP-beta-L-fucose + NADP(+) = GDP-4-dehydro-alpha-D-rhamnose + NADPH + H(+). Its pathway is nucleotide-sugar biosynthesis; GDP-L-fucose biosynthesis via de novo pathway; GDP-L-fucose from GDP-alpha-D-mannose: step 2/2. Its function is as follows. Catalyzes the two-step NADP-dependent conversion of GDP-4-dehydro-6-deoxy-D-mannose to GDP-fucose, involving an epimerase and a reductase reaction. Not involved in the synthesis of GDP-L-galactose from GDP-D-mannose. This chain is GDP-L-fucose synthase 1 (GER1), found in Arabidopsis thaliana (Mouse-ear cress).